The chain runs to 334 residues: Trans-3-hydroxy-L-proline dehydratase (334 aa).

Catalysis depends on Cys-91, which acts as the Proton acceptor. Substrate-binding positions include 92 to 93, Asp-250, and 255 to 256; these read GH and GT.

Belongs to the proline racemase family.

The enzyme catalyses trans-3-hydroxy-L-proline = 1-pyrroline-2-carboxylate + H2O. In terms of biological role, catalyzes the dehydration of trans-3-hydroxy-L-proline (t3LHyp) to Delta(1)-pyrroline-2-carboxylate (Pyr2C). Is likely involved in a degradation pathway that converts t3LHyp to L-proline, which allows B.cereus to grow on t3LHyp as a sole carbon source. Displays no proline racemase activity. The protein is Trans-3-hydroxy-L-proline dehydratase of Bacillus cereus (strain ATCC 14579 / DSM 31 / CCUG 7414 / JCM 2152 / NBRC 15305 / NCIMB 9373 / NCTC 2599 / NRRL B-3711).